Here is a 1265-residue protein sequence, read N- to C-terminus: Protein FAM193A (1265 aa).

Positions serine 107–tyrosine 142 form a coiled coil. The interval alanine 247 to isoleucine 272 is disordered. Residues serine 255–proline 271 are compositionally biased toward low complexity. At serine 293 the chain carries Phosphoserine. Disordered regions lie at residues asparagine 331–proline 407, glycine 553–lysine 586, valine 626–proline 674, glutamate 750–glutamate 785, leucine 822–serine 841, glutamate 859–glutamate 881, and glutamate 893–asparagine 1163. The span at glutamate 355–serine 365 shows a compositional bias: acidic residues. Serine 383 carries the phosphoserine modification. At serine 642 the chain carries Phosphoserine. Over residues glutamine 757–serine 769 the composition is skewed to acidic residues. Residues glutamate 772–threonine 781 show a composition bias toward low complexity. The span at alanine 868 to arginine 877 shows a compositional bias: basic residues. Residues arginine 873–alanine 932 adopt a coiled-coil conformation. 2 stretches are compositionally biased toward basic and acidic residues: residues glutamate 893–glutamate 905 and aspartate 915–lysine 929. Residues arginine 931–arginine 940 show a composition bias toward basic residues. A compositionally biased stretch (polar residues) spans arginine 953–leucine 973. A coiled-coil region spans residues threonine 1093–glutamate 1118. Phosphoserine occurs at positions 1129 and 1144. Over residues glycine 1149 to glycine 1159 the composition is skewed to basic residues.

This sequence belongs to the FAM193 family.

The polypeptide is Protein FAM193A (FAM193A) (Homo sapiens (Human)).